Reading from the N-terminus, the 508-residue chain is DNA-directed RNA polymerase subunit alpha (508 aa).

An alpha N-terminal domain (alpha-NTD) region spans residues 1-380 (MKHILLSCVE…HLFSPFLQTH (380 aa)). The tract at residues 434 to 508 (NLVTAIQTLD…LKNFGVLPTS (75 aa)) is alpha C-terminal domain (alpha-CTD).

Belongs to the RNA polymerase alpha chain family. In terms of assembly, in plastids the minimal PEP RNA polymerase catalytic core is composed of four subunits: alpha, beta, beta', and beta''. When a (nuclear-encoded) sigma factor is associated with the core the holoenzyme is formed, which can initiate transcription.

The protein localises to the plastid. It localises to the chloroplast. The catalysed reaction is RNA(n) + a ribonucleoside 5'-triphosphate = RNA(n+1) + diphosphate. In terms of biological role, DNA-dependent RNA polymerase catalyzes the transcription of DNA into RNA using the four ribonucleoside triphosphates as substrates. This chain is DNA-directed RNA polymerase subunit alpha (rpoA), found in Oltmannsiellopsis viridis (Marine flagellate).